The following is an 861-amino-acid chain: Leucine--tRNA ligase (861 aa).

The short motif at 42 to 52 (PYPSGRIHMGH) is the 'HIGH' region element. Positions 623–627 (KMSKS) match the 'KMSKS' region motif. Lys626 is an ATP binding site.

This sequence belongs to the class-I aminoacyl-tRNA synthetase family.

The protein resides in the cytoplasm. The enzyme catalyses tRNA(Leu) + L-leucine + ATP = L-leucyl-tRNA(Leu) + AMP + diphosphate. The protein is Leucine--tRNA ligase of Caulobacter sp. (strain K31).